A 33-amino-acid chain; its full sequence is Protamine TP17 (33 aa).

A disordered region spans residues 1 to 33 (MPRRRRSSSRPVRRRRRPRVSRRRRRRGRRRRR).

As to expression, testis.

Its subcellular location is the nucleus. The protein resides in the chromosome. Its function is as follows. Protamines substitute for histones in the chromatin of sperm during the haploid phase of spermatogenesis. They compact sperm DNA into a highly condensed, stable and inactive complex. The polypeptide is Protamine TP17 (Oncorhynchus mykiss (Rainbow trout)).